A 445-amino-acid polypeptide reads, in one-letter code: N-succinylarginine dihydrolase (445 aa).

Residues 19–28 (AGLSFGNVAS), N110, and 137–138 (HR) each bind substrate. The active site involves E174. Substrate is bound at residue R214. H250 is an active-site residue. The substrate site is built by D252 and N363. C369 serves as the catalytic Nucleophile.

It belongs to the succinylarginine dihydrolase family. Homodimer.

It catalyses the reaction N(2)-succinyl-L-arginine + 2 H2O + 2 H(+) = N(2)-succinyl-L-ornithine + 2 NH4(+) + CO2. Its pathway is amino-acid degradation; L-arginine degradation via AST pathway; L-glutamate and succinate from L-arginine: step 2/5. Its function is as follows. Catalyzes the hydrolysis of N(2)-succinylarginine into N(2)-succinylornithine, ammonia and CO(2). The polypeptide is N-succinylarginine dihydrolase (Shewanella halifaxensis (strain HAW-EB4)).